The following is a 500-amino-acid chain: FAD-linked oxidoreductase easE (500 aa).

Residues 37–220 form the FAD-binding PCMH-type domain; that stretch reads QGRIPLFTVG…TRATMRVFPD (184 aa).

This sequence belongs to the oxygen-dependent FAD-linked oxidoreductase family. Requires FAD as cofactor.

The protein operates within alkaloid biosynthesis; ergot alkaloid biosynthesis. Its function is as follows. FAD-linked oxidoreductase; part of the gene cluster that mediates the biosynthesis of fungal ergot alkaloid. DmaW catalyzes the first step of ergot alkaloid biosynthesis by condensing dimethylallyl diphosphate (DMAP) and tryptophan to form 4-dimethylallyl-L-tryptophan. The second step is catalyzed by the methyltransferase easF that methylates 4-dimethylallyl-L-tryptophan in the presence of S-adenosyl-L-methionine, resulting in the formation of 4-dimethylallyl-L-abrine. The catalase easC and the FAD-dependent oxidoreductase easE then transform 4-dimethylallyl-L-abrine to chanoclavine-I which is further oxidized by easD in the presence of NAD(+), resulting in the formation of chanoclavine-I aldehyde. Chanoclavine-I aldehyde is the precursor of ergoamides and ergopeptines in Clavicipitaceae, and clavine-type alcaloids such as fumiclavine in Trichocomaceae. However, the metabolites downstream of chanoclavine-I aldehyde in Arthrodermataceae have not been identified yet. The polypeptide is FAD-linked oxidoreductase easE (Arthroderma benhamiae (strain ATCC MYA-4681 / CBS 112371) (Trichophyton mentagrophytes)).